Consider the following 402-residue polypeptide: 4-hydroxy-3-methylbut-2-enyl diphosphate reductase (402 aa).

Cysteine 66 provides a ligand contact to [4Fe-4S] cluster. Histidine 96 provides a ligand contact to (2E)-4-hydroxy-3-methylbut-2-enyl diphosphate. Histidine 96 is a dimethylallyl diphosphate binding site. Histidine 96 serves as a coordination point for isopentenyl diphosphate. Residue cysteine 157 participates in [4Fe-4S] cluster binding. Histidine 185 is a binding site for (2E)-4-hydroxy-3-methylbut-2-enyl diphosphate. A dimethylallyl diphosphate-binding site is contributed by histidine 185. Position 185 (histidine 185) interacts with isopentenyl diphosphate. Catalysis depends on glutamate 187, which acts as the Proton donor. Threonine 250 provides a ligand contact to (2E)-4-hydroxy-3-methylbut-2-enyl diphosphate. Cysteine 288 lines the [4Fe-4S] cluster pocket. Residues serine 317, serine 318, asparagine 319, and serine 379 each contribute to the (2E)-4-hydroxy-3-methylbut-2-enyl diphosphate site. Serine 317, serine 318, asparagine 319, and serine 379 together coordinate dimethylallyl diphosphate. Residues serine 317, serine 318, asparagine 319, and serine 379 each contribute to the isopentenyl diphosphate site.

It belongs to the IspH family. Requires [4Fe-4S] cluster as cofactor.

The enzyme catalyses isopentenyl diphosphate + 2 oxidized [2Fe-2S]-[ferredoxin] + H2O = (2E)-4-hydroxy-3-methylbut-2-enyl diphosphate + 2 reduced [2Fe-2S]-[ferredoxin] + 2 H(+). It carries out the reaction dimethylallyl diphosphate + 2 oxidized [2Fe-2S]-[ferredoxin] + H2O = (2E)-4-hydroxy-3-methylbut-2-enyl diphosphate + 2 reduced [2Fe-2S]-[ferredoxin] + 2 H(+). It participates in isoprenoid biosynthesis; dimethylallyl diphosphate biosynthesis; dimethylallyl diphosphate from (2E)-4-hydroxy-3-methylbutenyl diphosphate: step 1/1. Its pathway is isoprenoid biosynthesis; isopentenyl diphosphate biosynthesis via DXP pathway; isopentenyl diphosphate from 1-deoxy-D-xylulose 5-phosphate: step 6/6. In terms of biological role, catalyzes the conversion of 1-hydroxy-2-methyl-2-(E)-butenyl 4-diphosphate (HMBPP) into a mixture of isopentenyl diphosphate (IPP) and dimethylallyl diphosphate (DMAPP). Acts in the terminal step of the DOXP/MEP pathway for isoprenoid precursor biosynthesis. The sequence is that of 4-hydroxy-3-methylbut-2-enyl diphosphate reductase from Crocosphaera subtropica (strain ATCC 51142 / BH68) (Cyanothece sp. (strain ATCC 51142)).